Reading from the N-terminus, the 63-residue chain is Metallothionein (63 aa).

Residues Met1 to Cys30 form a beta region. Cys6, Cys8, Cys14, Cys16, Cys20, Cys22, Cys25, Cys27, Cys30, Cys34, Cys35, Cys37, Cys38, Cys42, Cys45, Cys49, Cys51, Cys59, Cys61, and Cys62 together coordinate a divalent metal cation. Residues Arg31–His63 form an alpha region.

Belongs to the metallothionein superfamily. Type 1 family.

In terms of biological role, metallothioneins have a high content of cysteine residues that bind various heavy metals. This is Metallothionein from Anas platyrhynchos (Mallard).